The chain runs to 395 residues: uncharacterized protein (395 aa).

A run of 8 helical transmembrane segments spans residues 15-35 (ILAF…VTVF), 56-76 (WPWI…NIII), 86-106 (FHAP…FQIV), 131-151 (AVLL…LITW), 175-195 (WFSF…IFIA), 254-274 (LANI…FAIV), 298-318 (IAIT…TQFV), and 348-368 (VYIP…QVVI).

Its subcellular location is the cell membrane. This is an uncharacterized protein from Mycoplasma pneumoniae (strain ATCC 29342 / M129 / Subtype 1) (Mycoplasmoides pneumoniae).